The following is a 240-amino-acid chain: Large ribosomal subunit protein uL2 (240 aa).

Positions 1–11 (MGKRLISQNRG) are enriched in polar residues. Disordered stretches follow at residues 1–26 (MGKRLISQNRGRGTPKYRSPSHKRKG) and 206–240 (GGGRHQHLGKPSSVSRNTSPGRKVGHIASRRTGRK). 2 stretches are compositionally biased toward basic residues: residues 13 to 26 (GTPKYRSPSHKRKG) and 228 to 240 (KVGHIASRRTGRK).

This sequence belongs to the universal ribosomal protein uL2 family. Part of the 50S ribosomal subunit. Forms a bridge to the 30S subunit in the 70S ribosome.

Its function is as follows. One of the primary rRNA binding proteins. Required for association of the 30S and 50S subunits to form the 70S ribosome, for tRNA binding and peptide bond formation. It has been suggested to have peptidyltransferase activity; this is somewhat controversial. Makes several contacts with the 16S rRNA in the 70S ribosome. This chain is Large ribosomal subunit protein uL2, found in Methanococcus vannielii (strain ATCC 35089 / DSM 1224 / JCM 13029 / OCM 148 / SB).